A 423-amino-acid polypeptide reads, in one-letter code: Glycine amidinotransferase, mitochondrial (423 aa).

The N-terminal 48 residues, 1 to 48 (MLRVRCLRGGSRGAEAVHYIGSRLGRTLTGWVQRTFQSTQAATASSRN), are a transit peptide targeting the mitochondrion. The span at 39 to 51 (TQAATASSRNSSA) shows a compositional bias: low complexity. The segment at 39–65 (TQAATASSRNSSAADDKATEPLPKDCP) is disordered. A phosphoserine mark is found at serine 46 and serine 49. Over residues 52 to 61 (ADDKATEPLP) the composition is skewed to basic and acidic residues. Aspartate 170 contributes to the arginine binding site. Active-site residues include aspartate 254 and histidine 303. Positions 305, 322, 354, and 355 each coordinate arginine. Position 385 is an N6-acetyllysine (lysine 385). The active-site Amidino-cysteine intermediate is the cysteine 407.

This sequence belongs to the amidinotransferase family. In terms of assembly, homodimer.

The protein localises to the mitochondrion inner membrane. The catalysed reaction is L-arginine + glycine = guanidinoacetate + L-ornithine. It catalyses the reaction 4-aminobutanoate + L-arginine = 4-guanidinobutanoate + L-ornithine. It carries out the reaction beta-alanine + L-arginine = 3-guanidinopropanoate + L-ornithine. The enzyme catalyses taurine + L-arginine = taurocyamine + L-ornithine. The protein operates within amine and polyamine biosynthesis; creatine biosynthesis; creatine from L-arginine and glycine: step 1/2. In terms of biological role, transamidinase that catalyzes the transfer of the amidino group of L-arginine onto the amino moiety of acceptor metabolites such as glycine, beta-alanine, gamma-aminobutyric acid (GABA) and taurine yielding the corresponding guanidine derivatives. Catalyzes the rate-limiting step of creatine biosynthesis, namely the transfer of the amidino group from L-arginine to glycine to generate guanidinoacetate, which is then methylated by GAMT to form creatine. Provides creatine as a source for ATP generation in tissues with high energy demands, in particular skeletal muscle, heart and brain. The polypeptide is Glycine amidinotransferase, mitochondrial (GATM) (Pongo abelii (Sumatran orangutan)).